Here is a 301-residue protein sequence, read N- to C-terminus: Protoheme IX farnesyltransferase (301 aa).

Helical transmembrane passes span 20 to 42 (FTELVKIGIVNSNTITAFTGMWL), 55 to 75 (VDVIFFTIVGSALIVAASGAF), 105 to 125 (ALMVALVLGVVGTIMLFMTTW), 126 to 146 (QAGVLGVIGVFLYVVVYSLYA), 150 to 172 (LVSNTVIGSFSGAVPPLIGWFAV), 176 to 198 (FSIVPIMLFLVMFCWQPPHFYAI), 227 to 247 (MFFWVILLTVLPFFMFDLGLV), 249 to 269 (VILATLLNIGWLALSIYGFKM), and 280 to 300 (FVYSLNYMTILFVAMVVISIF).

The protein belongs to the UbiA prenyltransferase family. Protoheme IX farnesyltransferase subfamily. As to quaternary structure, interacts with CtaA.

The protein resides in the cell membrane. It carries out the reaction heme b + (2E,6E)-farnesyl diphosphate + H2O = Fe(II)-heme o + diphosphate. It functions in the pathway porphyrin-containing compound metabolism; heme O biosynthesis; heme O from protoheme: step 1/1. Its function is as follows. Converts heme B (protoheme IX) to heme O by substitution of the vinyl group on carbon 2 of heme B porphyrin ring with a hydroxyethyl farnesyl side group. This is Protoheme IX farnesyltransferase from Listeria innocua serovar 6a (strain ATCC BAA-680 / CLIP 11262).